Reading from the N-terminus, the 87-residue chain is Phosphoribosyl-ATP pyrophosphatase (87 aa).

This sequence belongs to the PRA-PH family.

The protein localises to the cytoplasm. The enzyme catalyses 1-(5-phospho-beta-D-ribosyl)-ATP + H2O = 1-(5-phospho-beta-D-ribosyl)-5'-AMP + diphosphate + H(+). Its pathway is amino-acid biosynthesis; L-histidine biosynthesis; L-histidine from 5-phospho-alpha-D-ribose 1-diphosphate: step 2/9. In Bifidobacterium animalis subsp. lactis (strain AD011), this protein is Phosphoribosyl-ATP pyrophosphatase.